The sequence spans 166 residues: Probable glucosamine 6-phosphate N-acetyltransferase 2 (166 aa).

The N-acetyltransferase domain occupies 21 to 166; the sequence is VQIRRLEATD…EKGVQMAIYF (146 aa). Substrate-binding positions include Ser43, 93-96, and 105-107; these read KFLR and EDV. Position 115 to 120 (115 to 120) interacts with acetyl-CoA; the sequence is GRGLGL. Position 136-137 (136-137) interacts with substrate; it reads YK. 150-152 is an acetyl-CoA binding site; sequence YAK.

It belongs to the acetyltransferase family. GNA1 subfamily. Homodimer.

The protein localises to the endoplasmic reticulum membrane. It carries out the reaction D-glucosamine 6-phosphate + acetyl-CoA = N-acetyl-D-glucosamine 6-phosphate + CoA + H(+). It participates in nucleotide-sugar biosynthesis; UDP-N-acetyl-alpha-D-glucosamine biosynthesis; N-acetyl-alpha-D-glucosamine 1-phosphate from alpha-D-glucosamine 6-phosphate (route I): step 1/2. In terms of biological role, acetyltransferase involved in UDP-N-acetylglucosamine (UDP-GlcNAc) biosynthesis. UDP-GlcNAc is an essential metabolite that serves as an initial sugar donor of N-glycan synthesis and thus plays an important role in protein and lipid glycosylation. The sequence is that of Probable glucosamine 6-phosphate N-acetyltransferase 2 from Oryza sativa subsp. japonica (Rice).